The chain runs to 444 residues: C4-dicarboxylate transport protein 1 (444 aa).

The next 9 membrane-spanning stretches (helical) occupy residues 9–29 (SIFL…VGIP), 42–62 (FIKL…VNGI), 78–98 (SVIY…VVAY), 152–172 (ILQV…VGEQ), 190–210 (IMGM…AFTT), 221–241 (LGAL…AVLG), 307–327 (FSIY…TPLA), 354–374 (VILA…LVLV), and 380–400 (FMGI…TVTI).

Belongs to the dicarboxylate/amino acid:cation symporter (DAACS) (TC 2.A.23) family.

The protein localises to the cell inner membrane. In terms of biological role, responsible for the transport of dicarboxylates such as succinate, fumarate, and malate from the periplasm across the membrane. The sequence is that of C4-dicarboxylate transport protein 1 from Pseudomonas paraeruginosa (strain DSM 24068 / PA7) (Pseudomonas aeruginosa (strain PA7)).